The chain runs to 409 residues: Phosphatidylserine decarboxylase proenzyme, mitochondrial (409 aa).

Residues 1-52 (MATSVGHRCLGLLHGVAPWRSSLHPCEITALSQSLQPLRKLPFRAFRTDARK) constitute a mitochondrion transit peptide. Residues 36-103 (QPLRKLPFRA…LGLEIPPKLA (68 aa)) form a necessary for localization to both lipid droplets and mitochondria region. At 53–63 (IHTAPARTMFL) the chain is on the mitochondrial matrix side. A helical membrane pass occupies residues 64–82 (LRPLPILLVTGGGYAGYRQ). Residues 83–409 (YEKYRERELE…IRFGEALGSL (327 aa)) lie on the Mitochondrial intermembrane side of the membrane. Active-site charge relay system; for autoendoproteolytic cleavage activity residues include D191, H267, and S378. The Schiff-base intermediate with substrate; via pyruvic acid; for decarboxylase activity role is filled by S378. S378 is modified (pyruvic acid (Ser); by autocatalysis).

The protein belongs to the phosphatidylserine decarboxylase family. PSD-B subfamily. Eukaryotic type I sub-subfamily. As to quaternary structure, heterodimer of a large membrane-associated beta subunit and a small pyruvoyl-containing alpha subunit. Pyruvate is required as a cofactor. In terms of processing, is synthesized initially as an inactive proenzyme. Formation of the active enzyme involves a self-maturation process in which the active site pyruvoyl group is generated from an internal serine residue via an autocatalytic post-translational modification. Two non-identical subunits are generated from the proenzyme in this reaction, and the pyruvate is formed at the N-terminus of the alpha chain, which is derived from the carboxyl end of the proenzyme. The autoendoproteolytic cleavage occurs by a canonical serine protease mechanism, in which the side chain hydroxyl group of the serine supplies its oxygen atom to form the C-terminus of the beta chain, while the remainder of the serine residue undergoes an oxidative deamination to produce ammonia and the pyruvoyl prosthetic group on the alpha chain. During this reaction, the Ser that is part of the protease active site of the proenzyme becomes the pyruvoyl prosthetic group, which constitutes an essential element of the active site of the mature decarboxylase.

Its subcellular location is the mitochondrion inner membrane. The protein resides in the cytoplasm. It is found in the lipid droplet. It carries out the reaction a 1,2-diacyl-sn-glycero-3-phospho-L-serine + H(+) = a 1,2-diacyl-sn-glycero-3-phosphoethanolamine + CO2. The protein operates within phospholipid metabolism; phosphatidylethanolamine biosynthesis. Its function is as follows. Catalyzes the formation of phosphatidylethanolamine (PtdEtn) from phosphatidylserine (PtdSer). Plays a central role in phospholipid metabolism and in the interorganelle trafficking of phosphatidylserine. May be involved in lipid droplet biogenesis at the endoplasmic reticulum membrane. The chain is Phosphatidylserine decarboxylase proenzyme, mitochondrial from Homo sapiens (Human).